A 58-amino-acid chain; its full sequence is Small ribosomal subunit protein bS21 (58 aa).

Residues 27 to 58 (GTLQELRKREHYEKPSVKRKRKSEAARKRKKY) form a disordered region. Basic and acidic residues predominate over residues 31 to 42 (ELRKREHYEKPS). Over residues 43–58 (VKRKRKSEAARKRKKY) the composition is skewed to basic residues.

This sequence belongs to the bacterial ribosomal protein bS21 family.

This chain is Small ribosomal subunit protein bS21 (rpsU), found in Lactococcus lactis subsp. lactis (strain IL1403) (Streptococcus lactis).